The chain runs to 310 residues: Ribosomal RNA large subunit methyltransferase F (310 aa).

It belongs to the methyltransferase superfamily. METTL16/RlmF family.

Its subcellular location is the cytoplasm. It carries out the reaction adenosine(1618) in 23S rRNA + S-adenosyl-L-methionine = N(6)-methyladenosine(1618) in 23S rRNA + S-adenosyl-L-homocysteine + H(+). Its function is as follows. Specifically methylates the adenine in position 1618 of 23S rRNA. The sequence is that of Ribosomal RNA large subunit methyltransferase F from Psychromonas ingrahamii (strain DSM 17664 / CCUG 51855 / 37).